Consider the following 443-residue polypeptide: Phenylalanine--tRNA ligase alpha subunit (443 aa).

L-phenylalanine contacts are provided by residues T332, 375–377, and Y415; that span reads QVE. E417 contacts Mg(2+). Position 441 (F441) interacts with L-phenylalanine.

It belongs to the class-II aminoacyl-tRNA synthetase family. Phe-tRNA synthetase alpha subunit type 2 subfamily. In terms of assembly, heterotetramer; dimer of two heterodimers formed by FARSA and FARSB. The cofactor is Mg(2+).

Its subcellular location is the cytoplasm. It catalyses the reaction tRNA(Phe) + L-phenylalanine + ATP = L-phenylalanyl-tRNA(Phe) + AMP + diphosphate + H(+). This is Phenylalanine--tRNA ligase alpha subunit (FARSA) from Gallus gallus (Chicken).